Reading from the N-terminus, the 103-residue chain is Small ribosomal subunit protein uS10 (103 aa).

This sequence belongs to the universal ribosomal protein uS10 family. Part of the 30S ribosomal subunit.

Its function is as follows. Involved in the binding of tRNA to the ribosomes. This chain is Small ribosomal subunit protein uS10, found in Saccharophagus degradans (strain 2-40 / ATCC 43961 / DSM 17024).